We begin with the raw amino-acid sequence, 334 residues long: Glutaredoxin-3 (334 aa).

Ala2 carries the post-translational modification N-acetylalanine. The 115-residue stretch at 2–116 (AGGAAEAAAA…LTKKVQRHAS (115 aa)) folds into the Thioredoxin domain. The interval 110 to 131 (KVQRHASSGSFSPSGSEHPKED) is disordered. Phosphoserine is present on residues Ser116 and Ser119. Residues 116–125 (SSGSFSPSGS) are compositionally biased toward low complexity. Glutaredoxin domains follow at residues 145-235 (CMLF…PKLE) and 236-334 (ERLK…KGEN). [2Fe-2S] cluster-binding residues include Cys158 and Cys260.

As to quaternary structure, homodimer; the homodimer is independent of 2Fe-2S clusters. Heterotrimer; forms a heterotrimeric complex composed by two BOLA2 molecules and one GLRX3 molecule; linked by [2Fe-2S] clusters. Interacts (via N-terminus) with PRKCQ/PKC-theta. Interacts (via C-terminus) with CSRP3. Interacts with CSRP2.

It is found in the cytoplasm. It localises to the cytosol. Its subcellular location is the cell cortex. The protein resides in the myofibril. The protein localises to the sarcomere. It is found in the z line. Together with BOLA2, acts as a cytosolic iron-sulfur (Fe-S) cluster assembly factor that facilitates [2Fe-2S] cluster insertion into a subset of cytosolic proteins. Acts as a critical negative regulator of cardiac hypertrophy and a positive inotropic regulator. Required for hemoglobin maturation. Does not possess any thyoredoxin activity since it lacks the conserved motif that is essential for catalytic activity. The polypeptide is Glutaredoxin-3 (GLRX3) (Bos taurus (Bovine)).